The chain runs to 320 residues: Methionine import ATP-binding protein MetN (320 aa).

Positions Ile2 to Gly237 constitute an ABC transporter domain. Gly34 to Ser41 lines the ATP pocket.

This sequence belongs to the ABC transporter superfamily. Methionine importer (TC 3.A.1.24) family. In terms of assembly, the complex is composed of two ATP-binding proteins (MetN), two transmembrane proteins (MetI) and a solute-binding protein (MetQ).

It is found in the cell membrane. It catalyses the reaction L-methionine(out) + ATP + H2O = L-methionine(in) + ADP + phosphate + H(+). It carries out the reaction D-methionine(out) + ATP + H2O = D-methionine(in) + ADP + phosphate + H(+). Its function is as follows. Part of the ABC transporter complex MetNIQ involved in methionine import. Responsible for energy coupling to the transport system. The protein is Methionine import ATP-binding protein MetN of Clostridium acetobutylicum (strain ATCC 824 / DSM 792 / JCM 1419 / IAM 19013 / LMG 5710 / NBRC 13948 / NRRL B-527 / VKM B-1787 / 2291 / W).